The chain runs to 282 residues: MKLVQTIKELQSELDALRSEGKTIGLVPTMGALHAGHASLVKRAVAENDVVVVSDFVNPTQFNDKNDLAKYPRTLDADCELLEKVGAAFVFAPSVEEIYPEPDTRQFSYAPLDTVMEGRFRPGHFNGVCQIVSKLFMIVNPTRAYFGEKDFQQLAIIREMVKQIGFNGLEIVGCPIVREEDGLALSSRNARLSAVEREYALNISQTLFKSCTFAKSHPVAETQKFVEDAIAAAPGLRLEYFEIVDGTTLQKITDWEDTDYAVGCITVFCGEVRLIDNIKYKG.

30-37 (MGALHAGH) serves as a coordination point for ATP. The active-site Proton donor is the His37. Gln61 is a binding site for (R)-pantoate. A beta-alanine-binding site is contributed by Gln61. Residue 147 to 150 (GEKD) coordinates ATP. Gln153 provides a ligand contact to (R)-pantoate. ATP contacts are provided by residues Val177 and 185 to 188 (LSSR).

It belongs to the pantothenate synthetase family. In terms of assembly, homodimer.

The protein localises to the cytoplasm. It carries out the reaction (R)-pantoate + beta-alanine + ATP = (R)-pantothenate + AMP + diphosphate + H(+). Its pathway is cofactor biosynthesis; (R)-pantothenate biosynthesis; (R)-pantothenate from (R)-pantoate and beta-alanine: step 1/1. Catalyzes the condensation of pantoate with beta-alanine in an ATP-dependent reaction via a pantoyl-adenylate intermediate. This chain is Pantothenate synthetase, found in Phocaeicola vulgatus (strain ATCC 8482 / DSM 1447 / JCM 5826 / CCUG 4940 / NBRC 14291 / NCTC 11154) (Bacteroides vulgatus).